The following is a 145-amino-acid chain: uncharacterized protein (145 aa).

A compositionally biased stretch (basic and acidic residues) spans 1-18 (MAEQQPSKEEKKEDKKDE). The tract at residues 1-61 (MAEQQPSKEE…CTEGEWDASD (61 aa)) is disordered.

This is an uncharacterized protein from Caenorhabditis elegans.